Consider the following 387-residue polypeptide: Leucine aminopeptidase 1 (387 aa).

Residues 1–18 form the signal peptide; that stretch reads MKIRAALALSATASGVLA. Residues 19–87 constitute a propeptide that is removed on maturation; sequence AVVPQQALLN…YPTLHQASNV (69 aa). Asn179 is a glycosylation site (N-linked (GlcNAc...) asparagine). Positions 187, 206, 245, and 272 each coordinate Zn(2+). A disulfide bond links Cys321 and Cys325. His354 is a binding site for Zn(2+).

The protein belongs to the peptidase M28 family. M28E subfamily. As to quaternary structure, monomer. Requires Zn(2+) as cofactor.

The protein localises to the secreted. Functionally, extracellular aminopeptidase that allows assimilation of proteinaceous substrates. The chain is Leucine aminopeptidase 1 (lap1) from Aspergillus oryzae (strain ATCC 42149 / RIB 40) (Yellow koji mold).